Consider the following 286-residue polypeptide: ATP synthase gamma chain (286 aa).

This sequence belongs to the ATPase gamma chain family. As to quaternary structure, F-type ATPases have 2 components, CF(1) - the catalytic core - and CF(0) - the membrane proton channel. CF(1) has five subunits: alpha(3), beta(3), gamma(1), delta(1), epsilon(1). CF(0) has three main subunits: a, b and c.

It localises to the cell membrane. Functionally, produces ATP from ADP in the presence of a proton gradient across the membrane. The gamma chain is believed to be important in regulating ATPase activity and the flow of protons through the CF(0) complex. This Ureaplasma parvum serovar 3 (strain ATCC 27815 / 27 / NCTC 11736) protein is ATP synthase gamma chain.